The following is a 284-amino-acid chain: MEMO1 family protein LS215_2219 (284 aa).

The protein belongs to the MEMO1 family.

This Saccharolobus islandicus (strain L.S.2.15 / Lassen #1) (Sulfolobus islandicus) protein is MEMO1 family protein LS215_2219.